The following is a 753-amino-acid chain: A-kinase anchor protein 200 (753 aa).

5 disordered regions span residues 1–345 (MGKA…QIEA), 462–482 (VETR…PSRV), 531–604 (TEQE…IDPA), 620–641 (VEKE…SDEQ), and 658–684 (VEET…DKEN). Gly-2 carries the N-myristoyl glycine lipid modification. Composition is skewed to basic and acidic residues over residues 8–38 (RSID…DQKT) and 59–77 (AVEK…DLTT). Positions 81 to 93 (AAVAEGGDAVAET) are enriched in low complexity. An F-actin binding region spans residues 119–148 (KSKSKKDKVKKKWSFRSISFGKKDKQKPAK). Residues 120–132 (SKSKKDKVKKKWS) show a composition bias toward basic residues. A phosphoserine mark is found at Ser-132, Ser-135, and Ser-137. Over residues 139-151 (GKKDKQKPAKSEE) the composition is skewed to basic and acidic residues. Residues 152–181 (ATSPTSGTTSPTTAEAEAAPAGDAAVAEPS) show a composition bias toward low complexity. Over residues 216-227 (EQEKQANGETEK) the composition is skewed to basic and acidic residues. The span at 246–262 (EPATVTATESNTTATEE) shows a compositional bias: low complexity. Positions 345-725 (ASSEVIETVT…AEQEGESNNK (381 aa)) are interaction with PKA-R2. A compositionally biased stretch (pro residues) spans 468-480 (SPPPPLPKSPPPS). A compositionally biased stretch (basic and acidic residues) spans 532 to 544 (EQEKQQEEAKVDS). The segment covering 545 to 561 (VPETIEESSSTVVVEEV) has biased composition (low complexity). Residues 578–594 (DVQKPIEDQDTPDEKES) show a composition bias toward basic and acidic residues. Residues 626–638 (SISSNVAESSSVS) are compositionally biased toward low complexity. Basic and acidic residues predominate over residues 674 to 684 (EEAHSDNDKEN).

Homodimer. Interacts with Cam; interaction is calcium-dependent and is inhibited by PKC-mediated phosphorylation of Akap200. Interacts with N/Notch; the interaction stabilizes N/Notch protein levels by preventing Cbl-mediated ubiquitination and subsequent lysosomal degradation of N/Notch. Interacts with Pka-R2. Binds to F-actin; interaction is independent of myristoylation, but is inhibited by Akap200 phosphorylation and Cam binding. Isoform B: Does not bind to Pka-R2. In terms of processing, myristoylated; myristoylation promotes accumulation at the cell periphery. Phosphorylated; phosphorylation prevents binding to F-actin and Cam. In terms of tissue distribution, detected in the brain in both neurons and glia (including perineurial glia); specifically in the neuronal nuclei in the cortex and synaptic neuropil (at protein level). Detected in germline cells, somatic follicle cells and outer rim of the ring canals during oogenesis (at protein level). Isoform A: Detected in the adult (at protein level). Isoform B: Detected in the adult with higher levels in the head (at protein level).

The protein resides in the cytoplasm. It localises to the cytosol. Its subcellular location is the cell membrane. The protein localises to the cytoskeleton. Functionally, scaffolding protein involved in the regulation of PKA signaling and anchoring to the actin cytoskeleton integrating signals propagated by cAMP, diacylglycerol and calcium. Contributes to the maintenance and regulation of cytoskeletal structures in germline via PKA-mediated signaling. As part of ethanol response in the glia, mediates ethanol-induced structural remodeling of actin cytoskeleton and perineurial membrane topology by anchoring PKA to the membrane of perineurial glia. In specific tissues such as eye and thorax, promotes N/Notch protein stability by inhibiting Cbl-mediated ubiquitination and lysosomal degradation pathway of N/Notch in a PKA-independent way. In the circadian brain neurons evening cells (E-cells), might have a role in circadian pacemaker synchronization by playing a redundant role in signaling downstream of the G protein-couple receptor Pdfr. The sequence is that of A-kinase anchor protein 200 from Drosophila melanogaster (Fruit fly).